The sequence spans 189 residues: Probable nicotinate-nucleotide adenylyltransferase (189 aa).

Belongs to the NadD family.

The catalysed reaction is nicotinate beta-D-ribonucleotide + ATP + H(+) = deamido-NAD(+) + diphosphate. It participates in cofactor biosynthesis; NAD(+) biosynthesis; deamido-NAD(+) from nicotinate D-ribonucleotide: step 1/1. In terms of biological role, catalyzes the reversible adenylation of nicotinate mononucleotide (NaMN) to nicotinic acid adenine dinucleotide (NaAD). The chain is Probable nicotinate-nucleotide adenylyltransferase from Bacillus pumilus (strain SAFR-032).